Consider the following 177-residue polypeptide: Putative adenylate kinase (177 aa).

ATP contacts are provided by G10, G12, K13, T14, and T15. Residues 30-53 (DITEAVKKYKLYTEKDEDMDSYVI) are NMP. Positions 103–113 (KRGYKPKKVLE) are LID. R104 is an ATP binding site.

Belongs to the adenylate kinase family. AK6 subfamily. Interacts with uS11. Not a structural component of 40S pre-ribosomes, but transiently interacts with them by binding to uS11.

The enzyme catalyses AMP + ATP = 2 ADP. It carries out the reaction ATP + H2O = ADP + phosphate + H(+). Functionally, broad-specificity nucleoside monophosphate (NMP) kinase that catalyzes the reversible transfer of the terminal phosphate group between nucleoside triphosphates and monophosphates. Also has ATPase activity. Involved in the late maturation steps of the 30S ribosomal particles, specifically 16S rRNA maturation. While NMP activity is not required for ribosome maturation, ATPase activity is. Associates transiently with small ribosomal subunit protein uS11. ATP hydrolysis breaks the interaction with uS11. May temporarily remove uS11 from the ribosome to enable a conformational change of the ribosomal RNA that is needed for the final maturation step of the small ribosomal subunit. The chain is Putative adenylate kinase from Methanocaldococcus jannaschii (strain ATCC 43067 / DSM 2661 / JAL-1 / JCM 10045 / NBRC 100440) (Methanococcus jannaschii).